A 290-amino-acid polypeptide reads, in one-letter code: Acetylglutamate kinase (290 aa).

Residues 64 to 65 (GG), arginine 86, and asparagine 183 contribute to the substrate site.

This sequence belongs to the acetylglutamate kinase family. ArgB subfamily.

It is found in the cytoplasm. It carries out the reaction N-acetyl-L-glutamate + ATP = N-acetyl-L-glutamyl 5-phosphate + ADP. It participates in amino-acid biosynthesis; L-arginine biosynthesis; N(2)-acetyl-L-ornithine from L-glutamate: step 2/4. Functionally, catalyzes the ATP-dependent phosphorylation of N-acetyl-L-glutamate. The chain is Acetylglutamate kinase from Halothermothrix orenii (strain H 168 / OCM 544 / DSM 9562).